We begin with the raw amino-acid sequence, 195 residues long: Inosine triphosphate pyrophosphatase (195 aa).

Residue 13–18 (TGNAKK) coordinates ITP. Glu-43 lines the Mg(2+) pocket. Residues Lys-55, 71-72 (DT), Lys-88, 148-151 (FGWD), Lys-171, and 176-177 (HR) contribute to the ITP site.

Belongs to the HAM1 NTPase family. Homodimer. Mg(2+) is required as a cofactor. Mn(2+) serves as cofactor.

The protein localises to the cytoplasm. It carries out the reaction ITP + H2O = IMP + diphosphate + H(+). The enzyme catalyses dITP + H2O = dIMP + diphosphate + H(+). It catalyses the reaction XTP + H2O = XMP + diphosphate + H(+). The catalysed reaction is N(6)-hydroxy-dATP + H2O = N(6)-hydroxy-dAMP + diphosphate + H(+). Its function is as follows. Pyrophosphatase that hydrolyzes the non-canonical purine nucleotides inosine triphosphate (ITP), deoxyinosine triphosphate (dITP) as well as 2'-deoxy-N-6-hydroxylaminopurine triphosphate (dHAPTP) and xanthosine 5'-triphosphate (XTP) to their respective monophosphate derivatives. The enzyme does not distinguish between the deoxy- and ribose forms. Probably excludes non-canonical purines from RNA and DNA precursor pools, thus preventing their incorporation into RNA and DNA and avoiding chromosomal lesions. This is Inosine triphosphate pyrophosphatase (itpa) from Xenopus laevis (African clawed frog).